Here is a 366-residue protein sequence, read N- to C-terminus: Beta sliding clamp (366 aa).

The protein belongs to the beta sliding clamp family. As to quaternary structure, forms a ring-shaped head-to-tail homodimer around DNA which binds and tethers DNA polymerases and other proteins to the DNA. The DNA replisome complex has a single clamp-loading complex (3 tau and 1 each of delta, delta', psi and chi subunits) which binds 3 Pol III cores (1 core on the leading strand and 2 on the lagging strand) each with a beta sliding clamp dimer. Additional proteins in the replisome are other copies of gamma, psi and chi, Ssb, DNA helicase and RNA primase.

It is found in the cytoplasm. Confers DNA tethering and processivity to DNA polymerases and other proteins. Acts as a clamp, forming a ring around DNA (a reaction catalyzed by the clamp-loading complex) which diffuses in an ATP-independent manner freely and bidirectionally along dsDNA. Initially characterized for its ability to contact the catalytic subunit of DNA polymerase III (Pol III), a complex, multichain enzyme responsible for most of the replicative synthesis in bacteria; Pol III exhibits 3'-5' exonuclease proofreading activity. The beta chain is required for initiation of replication as well as for processivity of DNA replication. The protein is Beta sliding clamp (dnaN) of Buchnera aphidicola subsp. Rhopalosiphum padi.